We begin with the raw amino-acid sequence, 103 residues long: uncharacterized protein (103 aa).

The N-terminal stretch at 1-22 is a signal peptide; sequence MFRPFLNSLMLGSLFFPFIAIA.

To the N-terminal of the FimA/PapA family of fimbria proteins.

This is an uncharacterized protein from Escherichia coli (strain K12).